A 127-amino-acid chain; its full sequence is Glycine cleavage system H protein (127 aa).

The region spanning 22–104 (TVRIGITDFA…YDKAWMIVIE (83 aa)) is the Lipoyl-binding domain. Position 63 is an N6-lipoyllysine (Lys-63).

Belongs to the GcvH family. In terms of assembly, the glycine cleavage system is composed of four proteins: P, T, L and H. The cofactor is (R)-lipoate.

Its function is as follows. The glycine cleavage system catalyzes the degradation of glycine. The H protein shuttles the methylamine group of glycine from the P protein to the T protein. Is also involved in protein lipoylation via its role as an octanoyl/lipoyl carrier protein intermediate. This chain is Glycine cleavage system H protein, found in Anoxybacillus flavithermus (strain DSM 21510 / WK1).